The sequence spans 216 residues: RNA pyrophosphohydrolase (216 aa).

The Nudix hydrolase domain maps to 6–149 (GFRPNVGIIL…KRDVYQLALT (144 aa)). The Nudix box signature appears at 38–59 (GGIKYGETPMQAMYRELHEETG). The disordered stretch occupies residues 159–188 (AQRTDKSRGPRAPRYPRVANGHAASEAPAA).

Belongs to the Nudix hydrolase family. RppH subfamily. The cofactor is a divalent metal cation.

Its function is as follows. Accelerates the degradation of transcripts by removing pyrophosphate from the 5'-end of triphosphorylated RNA, leading to a more labile monophosphorylated state that can stimulate subsequent ribonuclease cleavage. In Burkholderia mallei (strain NCTC 10247), this protein is RNA pyrophosphohydrolase.